We begin with the raw amino-acid sequence, 281 residues long: Beta-etherase (281 aa).

The 77-residue stretch at 11-87 (DLQLESGCTI…YLDEKYPDRP (77 aa)) folds into the GST N-terminal domain. The interval 244 to 281 (GDPEPFVRQTGPAGAGGQALNKGPQTTKMPPRVAEKAD) is disordered.

This sequence belongs to the GST superfamily.

Its subcellular location is the cell inner membrane. Its function is as follows. Able to degrade various dimeric lignin compounds. Catalyzes the unique and reductive cleavage of arylglycerol-beta-aryl ether. In Sphingobium sp. (strain NBRC 103272 / SYK-6), this protein is Beta-etherase (ligE).